Reading from the N-terminus, the 348-residue chain is Farnesoic acid carboxyl-O-methyltransferase (348 aa).

Y16 provides a ligand contact to S-adenosyl-L-methionine. Substrate-binding positions include Y16 and 19-23 (HSKYQ). Residues G57, 57–58 (GC), N63, 94–97 (FNDS), 123–125 (SFF), and 140–142 (SYS) contribute to the S-adenosyl-L-methionine site. Position 141-145 (141-145 (YSLHF)) interacts with substrate. Residues N162, D247, and F249 each contribute to the Mg(2+) site.

This sequence belongs to the methyltransferase superfamily. SABATH family. In terms of assembly, homodimer. Mg(2+) serves as cofactor. As to expression, mostly expressed in leaves and, at very low levels, in roots, stems, flowers and siliques.

It carries out the reaction (2E,6E)-farnesoate + S-adenosyl-L-methionine = methyl (2E,6E)-farnesoate + S-adenosyl-L-homocysteine. The catalysed reaction is juvenile hormone III carboxylate + S-adenosyl-L-methionine = juvenile hormone III + S-adenosyl-L-homocysteine. It participates in sesquiterpene biosynthesis. With respect to regulation, activated by Mn(2+) ions. Strongly inhibited by Cu(2+), Zn(2+), Fe(3+) and Fe(2+) ions. Moderately inhibited by Na(+) and Ca(2+) ions. Rapidly degraded at temperatures above 40 degrees Celsius. May catalyze the production of the insect juvenile hormone methyl farnesoate (MeFA) to trigger defense against insect herbivory. In Arabidopsis thaliana (Mouse-ear cress), this protein is Farnesoic acid carboxyl-O-methyltransferase.